Here is a 218-residue protein sequence, read N- to C-terminus: Octanoyltransferase (218 aa).

The region spanning 31–206 (REAADEVWLV…QLVKHLDYAE (176 aa)) is the BPL/LPL catalytic domain. Residues 70–77 (RGGQVTYH), 137–139 (SLG), and 150–152 (GLA) each bind substrate. The Acyl-thioester intermediate role is filled by Cys-168.

Belongs to the LipB family.

It is found in the cytoplasm. The enzyme catalyses octanoyl-[ACP] + L-lysyl-[protein] = N(6)-octanoyl-L-lysyl-[protein] + holo-[ACP] + H(+). The protein operates within protein modification; protein lipoylation via endogenous pathway; protein N(6)-(lipoyl)lysine from octanoyl-[acyl-carrier-protein]: step 1/2. In terms of biological role, catalyzes the transfer of endogenously produced octanoic acid from octanoyl-acyl-carrier-protein onto the lipoyl domains of lipoate-dependent enzymes. Lipoyl-ACP can also act as a substrate although octanoyl-ACP is likely to be the physiological substrate. The polypeptide is Octanoyltransferase (Pseudomonas savastanoi pv. phaseolicola (strain 1448A / Race 6) (Pseudomonas syringae pv. phaseolicola (strain 1448A / Race 6))).